The primary structure comprises 390 residues: MSKQLGQKIAPTPISNDINVVDLIDQYFTAYNSARLREICQLLSRDVLTEGVTVGVSLSGAMTPAGFGVSALAPLIRNGFIDWMISTGANLYHDMHYGLGFELFAGNPFLDDVKLRQEGTIRIYDIIFGYDVLLETDAFIRKILQGEAFQKRMGTAEFHYLLGKYVREVEKQLGVQHSCLLATAYEYGVPIYTSSPGDSSIGMNVAALALEGSQLVLDPSIDVNETAAIAYNARESGGKSAAVILGGGSPKNFLLQTQPQLHEVLGLEERGHDYFVQFTDARPDTGGLSGATPSEAVSWGKIDPEELPNTIVCYTDSTIALPLVTAYVLNKCQPRPLKRIYDKREAILDKLQKDYLAAKTQPSDQVPAAVAESAQKQTATYPCGRLIPNT.

Belongs to the deoxyhypusine synthase family.

The polypeptide is Deoxyhypusine synthase-like protein (Nostoc punctiforme (strain ATCC 29133 / PCC 73102)).